The sequence spans 312 residues: RNA binding protein fox-1 homolog 3 (312 aa).

The segment covering 1 to 29 has biased composition (pro residues); the sequence is MAQPYPPAQYPPPPQNGIPAEYAPPPPHP. The segment at 1–104 is disordered; sequence MAQPYPPAQY…KQQPKRLHVS (104 aa). Positions 49 to 87 are enriched in polar residues; sequence TPAQTHPEQPGSEASTQPIAGTQTVPQTDEAAQTDSQPL. The 76-residue stretch at 100–175 folds into the RRM domain; it reads RLHVSNIPFR…RKIEVNNATA (76 aa). Arg223 carries the post-translational modification Asymmetric dimethylarginine; alternate. At Arg223 the chain carries Omega-N-methylarginine; alternate. Arg272 bears the Asymmetric dimethylarginine mark.

It is found in the nucleus. It localises to the cytoplasm. In terms of biological role, pre-mRNA alternative splicing regulator. Regulates alternative splicing of RBFOX2 to enhance the production of mRNA species that are targeted for nonsense-mediated decay (NMD). The protein is RNA binding protein fox-1 homolog 3 (RBFOX3) of Homo sapiens (Human).